Consider the following 510-residue polypeptide: MSVELWQQCVELLRDELPAQQFNTWIRPLQVEAEGDELRVYAPNRFVLDWVNEKYLGRLLELLGENGSGIAPALSLLIGSRRSSAPRAAPNAPVSAAVAASLAQTQAHKAAPTPAAVEPIAVAAAEPVLVDELAEPSSRDSFDAMAEPASAPASSGRAEQRTVQVEGALKHTSYLNRTFTFDTFVEGKSNQLARAAAWQVADNPKHGYNPLFLYGGVGLGKTHLMHAVGNHLLKKNPNAKVVYLHSERFVADMVKALQLNAINEFKRFYRSVDALLIDDIQFFARKERSQEEFFHTFNALLEGGQQVILTSDRYPKEIEGLEERLKSRFGWGLTVAVEPPELETRVAILMKKADQAKVELPHDAAFFIAQRIRSNVRELEGALKRVIAHSHFMGRDITIELIRESLKDLLALQDKLVSVDNIQRTVAEYYKIKISDLLSKRRSRSVARPRQVAMALSKELTNHSLPEIGDMFGGRDHTTVLHACRKINELKESDADIREDYKNLLRTLTT.

The segment at 1–87 is domain I, interacts with DnaA modulators; it reads MSVELWQQCV…IGSRRSSAPR (87 aa). Residues 87-173 form a domain II region; it reads RAAPNAPVSA…QVEGALKHTS (87 aa). The segment at 140–160 is disordered; the sequence is DSFDAMAEPASAPASSGRAEQ. The segment covering 144–157 has biased composition (low complexity); it reads AMAEPASAPASSGR. The interval 174–390 is domain III, AAA+ region; sequence YLNRTFTFDT…GALKRVIAHS (217 aa). Positions 218, 220, 221, and 222 each coordinate ATP. Positions 391-510 are domain IV, binds dsDNA; it reads HFMGRDITIE…YKNLLRTLTT (120 aa).

The protein belongs to the DnaA family. Oligomerizes as a right-handed, spiral filament on DNA at oriC.

The protein resides in the cytoplasm. Plays an essential role in the initiation and regulation of chromosomal replication. ATP-DnaA binds to the origin of replication (oriC) to initiate formation of the DNA replication initiation complex once per cell cycle. Binds the DnaA box (a 9 base pair repeat at the origin) and separates the double-stranded (ds)DNA. Forms a right-handed helical filament on oriC DNA; dsDNA binds to the exterior of the filament while single-stranded (ss)DNA is stabiized in the filament's interior. The ATP-DnaA-oriC complex binds and stabilizes one strand of the AT-rich DNA unwinding element (DUE), permitting loading of DNA polymerase. After initiation quickly degrades to an ADP-DnaA complex that is not apt for DNA replication. Binds acidic phospholipids. This is Chromosomal replication initiator protein DnaA from Pseudomonas putida (strain GB-1).